A 379-amino-acid chain; its full sequence is Cytochrome b (379 aa).

4 helical membrane-spanning segments follow: residues 33–53 (FGSL…FLAM), 77–98 (WLIR…FIHV), 113–133 (WNIG…GYVL), and 178–198 (FFAF…VHLL). Residues H83 and H97 each coordinate heme b. Heme b contacts are provided by H182 and H196. H201 is a binding site for a ubiquinone. The next 4 membrane-spanning stretches (helical) occupy residues 226 to 246 (IKDL…ALFF), 288 to 308 (LGGV…PLLN), 320 to 340 (ITQT…WIGG), and 347 to 367 (FTTI…ILMP).

This sequence belongs to the cytochrome b family. In terms of assembly, the cytochrome bc1 complex contains 11 subunits: 3 respiratory subunits (MT-CYB, CYC1 and UQCRFS1), 2 core proteins (UQCRC1 and UQCRC2) and 6 low-molecular weight proteins (UQCRH/QCR6, UQCRB/QCR7, UQCRQ/QCR8, UQCR10/QCR9, UQCR11/QCR10 and a cleavage product of UQCRFS1). This cytochrome bc1 complex then forms a dimer. Heme b is required as a cofactor.

Its subcellular location is the mitochondrion inner membrane. Its function is as follows. Component of the ubiquinol-cytochrome c reductase complex (complex III or cytochrome b-c1 complex) that is part of the mitochondrial respiratory chain. The b-c1 complex mediates electron transfer from ubiquinol to cytochrome c. Contributes to the generation of a proton gradient across the mitochondrial membrane that is then used for ATP synthesis. The protein is Cytochrome b (MT-CYB) of Akodon affinis (Colombian grass mouse).